The following is a 171-amino-acid chain: NADH-quinone oxidoreductase subunit I (171 aa).

2 4Fe-4S ferredoxin-type domains span residues 63–92 (RRYE…IESD) and 102–131 (TRYD…ETQI). [4Fe-4S] cluster-binding residues include Cys72, Cys75, Cys78, Cys82, Cys111, Cys114, Cys117, and Cys121.

This sequence belongs to the complex I 23 kDa subunit family. As to quaternary structure, NDH-1 is composed of 14 different subunits. Subunits NuoA, H, J, K, L, M, N constitute the membrane sector of the complex. The cofactor is [4Fe-4S] cluster.

Its subcellular location is the cell inner membrane. The enzyme catalyses a quinone + NADH + 5 H(+)(in) = a quinol + NAD(+) + 4 H(+)(out). Functionally, NDH-1 shuttles electrons from NADH, via FMN and iron-sulfur (Fe-S) centers, to quinones in the respiratory chain. The immediate electron acceptor for the enzyme in this species is believed to be ubiquinone. Couples the redox reaction to proton translocation (for every two electrons transferred, four hydrogen ions are translocated across the cytoplasmic membrane), and thus conserves the redox energy in a proton gradient. The chain is NADH-quinone oxidoreductase subunit I from Paracidovorax citrulli (strain AAC00-1) (Acidovorax citrulli).